A 611-amino-acid chain; its full sequence is MESMFEDDISILTQEALGPSEVWLDGPGDPSLGGDMCSASHFALITAYGDIKERLGGLERENATLRRRLKVYEIKYPLITDFGEEHGFPLYELKDGSLLEVEKVSLQQRLNQFQHELQKSKEQEEQLGEMIQAYEKLCVEKSDLETELGEMRALVETHLRQICGLEKQLQQQQGLRDAAFSSLSPPAVPASACPDLDLHYLALRGGPALGHAGWPGPTSVSVSELERRRLEEALEAAQGEARGAQLREEQLQAECERLQGELKQLQETRAQDLASNQSECDMAWVKRVGDDQVNLALAYTELTEELGRLRELSSLQGRILRTLLQEQARNAGQRHSPLSQRHSPAPACPSPSPPARPPPCAPCQSPAAQRRSPVPPCPSPQQRRSPASPSCPSPVPQRRSPVPPSCQSPSPQRRSPVPPSCPAPQPRPPPPPGERTLAERVYAKPPSHHAKAGFQGRRSYSELAEGAAYAGASPAWLQAEAATLPKPRAYGGELYGRPLSPRRAFEGIRLRFEKQPSEEEEWAMPASPPSPEAGTIRCASFCAGFPIPESPAATAYAHAEHAQSWPSINLLMETVGSDIRSCPLCQLGFPVGYPDDALIKHIDSHLENSKI.

The homodimerization stretch occupies residues 1–280; the sequence is MESMFEDDIS…QDLASNQSEC (280 aa). Residues 48 to 162 adopt a coiled-coil conformation; sequence YGDIKERLGG…ALVETHLRQI (115 aa). S184 carries the post-translational modification Phosphoserine. Residues 218 to 277 adopt a coiled-coil conformation; sequence TSVSVSELERRRLEEALEAAQGEARGAQLREEQLQAECERLQGELKQLQETRAQDLASNQ. The tract at residues 281-330 is interaction with TBK1 and IKBKE; it reads DMAWVKRVGDDQVNLALAYTELTEELGRLRELSSLQGRILRTLLQEQARN. A disordered region spans residues 328–437; the sequence is ARNAGQRHSP…PPPPPGERTL (110 aa). Over residues 346–361 the composition is skewed to pro residues; sequence PACPSPSPPARPPPCA. The segment covering 362–372 has biased composition (low complexity); sequence PCQSPAAQRRS. Phosphoserine is present on residues S365, S372, S379, S385, S400, and S415. The segment covering 389–406 has biased composition (pro residues); it reads PSCPSPVPQRRSPVPPSC. A compositionally biased stretch (pro residues) spans 416-433; the sequence is PVPPSCPAPQPRPPPPPG. Phosphoserine is present on residues S500 and S530. A UBZ1-type zinc finger spans residues 579–605; sequence IRSCPLCQLGFPVGYPDDALIKHIDSH. 4 residues coordinate Zn(2+): C582, C585, H601, and H605.

Homodimer. May form a heterodimer with NAP1. Interacts with TKB1 and IKBKE. Weakly interacts with DDX3X.

Adapter protein which constitutively binds TBK1 and IKBKE playing a role in antiviral innate immunity. Essential for the efficient induction of IRF-dependent transcription following infection with Sendai virus. The chain is TANK-binding kinase 1-binding protein 1 from Mus musculus (Mouse).